Consider the following 265-residue polypeptide: Deoxycytidine kinase 2 (265 aa).

An ATP-binding site is contributed by 31 to 39 (GNIAAGKST). Residues Glu56, Tyr89, and Gln100 each coordinate substrate. Residue Glu130 is the Proton acceptor of the active site. Residues Arg131 and Asp136 each contribute to the substrate site. 191-195 (RLQKR) is a binding site for ATP. Residue Glu200 participates in substrate binding. An ATP-binding site is contributed by 243 to 245 (EDF).

It belongs to the DCK/DGK family. As to quaternary structure, homodimer. As to expression, expressed at high levels in adult intestine, spleen, thymus and testis with lower levels in skeletal muscle and eye. In the embryo, expressed at higher levels until day 10 with lower levels in later stages.

It is found in the nucleus. The catalysed reaction is 2'-deoxycytidine + a ribonucleoside 5'-triphosphate = dCMP + a ribonucleoside 5'-diphosphate + H(+). It catalyses the reaction 2'-deoxyguanosine + ATP = dGMP + ADP + H(+). The enzyme catalyses 2'-deoxyadenosine + ATP = dAMP + ADP + H(+). In terms of biological role, phosphorylates the deoxyribonucleosides deoxyadenosine, deoxycytidine and deoxyguanosine. Shows highest activity against deoxyguanosine followed by deoxycytidine and then deoxyadenosine. Shows only very minor activity against deoxyuridine and deoxythymidine. This Gallus gallus (Chicken) protein is Deoxycytidine kinase 2.